The chain runs to 206 residues: Small ribosomal subunit protein uS4A (206 aa).

The region spanning 96 to 156 is the S4 RNA-binding domain; the sequence is GRLDNVVYRM…EKAKKQSRIG (61 aa).

This sequence belongs to the universal ribosomal protein uS4 family. In terms of assembly, part of the 30S ribosomal subunit. Contacts protein S5. The interaction surface between S4 and S5 is involved in control of translational fidelity.

One of the primary rRNA binding proteins, it binds directly to 16S rRNA where it nucleates assembly of the body of the 30S subunit. In terms of biological role, with S5 and S12 plays an important role in translational accuracy. This is Small ribosomal subunit protein uS4A from Psychromonas ingrahamii (strain DSM 17664 / CCUG 51855 / 37).